The following is a 306-amino-acid chain: Pantothenate kinase (306 aa).

Residue 91–98 coordinates ATP; that stretch reads GSVAVGKS.

It belongs to the prokaryotic pantothenate kinase family.

Its subcellular location is the cytoplasm. It carries out the reaction (R)-pantothenate + ATP = (R)-4'-phosphopantothenate + ADP + H(+). Its pathway is cofactor biosynthesis; coenzyme A biosynthesis; CoA from (R)-pantothenate: step 1/5. This is Pantothenate kinase (coaA) from Streptococcus pyogenes serotype M1.